Reading from the N-terminus, the 129-residue chain is Lysozyme C (129 aa).

In terms of domain architecture, C-type lysozyme spans 1-129 (KVYGRCELAA…VHAWIRGCRL (129 aa)). Cystine bridges form between Cys6–Cys127, Cys30–Cys115, Cys64–Cys80, and Cys76–Cys94. Catalysis depends on residues Glu35 and Asp52.

It belongs to the glycosyl hydrolase 22 family. Monomer.

The protein resides in the secreted. It carries out the reaction Hydrolysis of (1-&gt;4)-beta-linkages between N-acetylmuramic acid and N-acetyl-D-glucosamine residues in a peptidoglycan and between N-acetyl-D-glucosamine residues in chitodextrins.. Functionally, lysozymes have primarily a bacteriolytic function; those in tissues and body fluids are associated with the monocyte-macrophage system and enhance the activity of immunoagents. The chain is Lysozyme C (LYZ) from Lophophorus impejanus (Himalayan monal pheasant).